Reading from the N-terminus, the 393-residue chain is PPE family protein PPE26 (393 aa).

The protein belongs to the mycobacterial PPE family. As to quaternary structure, interacts with human TLR2.

Functionally, probably plays a key role in regulating innate and adaptive immune responses through human Toll-like receptor 2 (TLR2). Interacts with TLR2, leading to the subsequent activation of the mitogen-activated protein kinase (MAPK) and nuclear factor kappa B (NF-kappa-B) signaling pathways. Stimulates macrophage activation by augmenting pro-inflammatory cytokine production (TNF-alpha, IL-6 and IL-12p40) and the expression of cell surface molecules (CD80, CD86, MHC class I and II). Also participates in adaptive immunity by directing Th1-polarised immune responses. The protein is PPE family protein PPE26 of Mycobacterium tuberculosis (strain ATCC 25618 / H37Rv).